Reading from the N-terminus, the 464-residue chain is Asparagine--tRNA ligase (464 aa).

Belongs to the class-II aminoacyl-tRNA synthetase family. Homodimer.

The protein localises to the cytoplasm. It carries out the reaction tRNA(Asn) + L-asparagine + ATP = L-asparaginyl-tRNA(Asn) + AMP + diphosphate + H(+). This is Asparagine--tRNA ligase from Clostridium beijerinckii (strain ATCC 51743 / NCIMB 8052) (Clostridium acetobutylicum).